Here is a 77-residue protein sequence, read N- to C-terminus: Acyl carrier protein (77 aa).

The region spanning 1–76 (MSLEDDVKAI…DVIKYIQERQ (76 aa)) is the Carrier domain. Position 36 is an O-(pantetheine 4'-phosphoryl)serine (Ser-36).

The protein belongs to the acyl carrier protein (ACP) family. In terms of processing, 4'-phosphopantetheine is transferred from CoA to a specific serine of apo-ACP by AcpS. This modification is essential for activity because fatty acids are bound in thioester linkage to the sulfhydryl of the prosthetic group.

The protein localises to the cytoplasm. It participates in lipid metabolism; fatty acid biosynthesis. Carrier of the growing fatty acid chain in fatty acid biosynthesis. The polypeptide is Acyl carrier protein (Chlamydia muridarum (strain MoPn / Nigg)).